The primary structure comprises 421 residues: WD repeat and SOCS box-containing protein 1 (421 aa).

6 WD repeats span residues 32–71 (KCGR…QNFL), 124–165 (SRCV…LLLN), 168–208 (DHTE…NMMK), 212–251 (GHQN…MIRK), 254–293 (GHHH…ILME), and 309–346 (ANDR…DYPV). Residues 372–421 (DGSVYFWATPRQVPSLQHLCRMSIRRVMPTQEVQELPIPSKLLEFLSYRI) enclose the SOCS box domain.

In terms of assembly, interacts with DIO2. Component of the probable ECS(WSB1) E3 ubiquitin ligase complex which contains CUL5, RNF7/RBX2, Elongin BC complex and WSB1. Component of a probable ECS-like E3 ubiquitin-protein ligase complex which contains CUL5, RBX1, Elongin BC complex and WSB1. Interacts with CUL5, RNF7, ELOB and ELOC. Binds to HIPK2 through WD40 repeats.

It participates in protein modification; protein ubiquitination. Probable substrate-recognition component of a SCF-like ECS (Elongin-Cullin-SOCS-box protein) E3 ubiquitin ligase complex which mediates the ubiquitination and subsequent proteasomal degradation of target proteins. Recognizes type II iodothyronine deiodinase/DIO2. Confers constitutive instability to HIPK2 through proteasomal degradation. The sequence is that of WD repeat and SOCS box-containing protein 1 (WSB1) from Homo sapiens (Human).